The primary structure comprises 209 residues: Large ribosomal subunit protein uL3 (209 aa).

Residues 127–164 (NFSGGQRTHGQSDRLRAPGSVGGASDPSRTFKGTKMGG) form a disordered region.

It belongs to the universal ribosomal protein uL3 family. Part of the 50S ribosomal subunit. Forms a cluster with proteins L14 and L19.

In terms of biological role, one of the primary rRNA binding proteins, it binds directly near the 3'-end of the 23S rRNA, where it nucleates assembly of the 50S subunit. The polypeptide is Large ribosomal subunit protein uL3 (Chlorobium phaeobacteroides (strain BS1)).